The following is a 254-amino-acid chain: Alcohol dehydrogenase (254 aa).

10–33 (FVAGLGGIGLDTSKGIVKAGPKNL) serves as a coordination point for NAD(+). Ser-138 contacts substrate. Catalysis depends on Tyr-151, which acts as the Proton acceptor.

It belongs to the short-chain dehydrogenases/reductases (SDR) family. In terms of assembly, homodimer.

It carries out the reaction a primary alcohol + NAD(+) = an aldehyde + NADH + H(+). The enzyme catalyses a secondary alcohol + NAD(+) = a ketone + NADH + H(+). This chain is Alcohol dehydrogenase (Adh), found in Drosophila immigrans (Fruit fly).